Here is a 756-residue protein sequence, read N- to C-terminus: Putative beta-xylosidase (756 aa).

An N-terminal signal peptide occupies residues 1–18 (MKKLLFTFLVSTGTIFFS). Cys19 carries the N-palmitoyl cysteine lipid modification. Cys19 is lipidated: S-diacylglycerol cysteine.

This sequence belongs to the glycosyl hydrolase 3 family.

The protein localises to the cell outer membrane. Glycoside hydrolase probably involved in ulvan degradation. Ulvan is the main polysaccharide component of the Ulvales (green seaweed) cell wall. It is composed of disaccharide building blocks comprising 3-sulfated rhamnose (Rha3S) linked to D-glucuronic acid (GlcA), L-iduronic acid (IduA), or D-xylose (Xyl). This chain is Putative beta-xylosidase, found in Formosa agariphila (strain DSM 15362 / KCTC 12365 / LMG 23005 / KMM 3901 / M-2Alg 35-1).